The primary structure comprises 141 residues: uncharacterized protein (141 aa).

The next 5 helical transmembrane spans lie at 7-27 (FWAL…KVGV), 34-54 (FATL…VAAT), 69-89 (LFLA…FRAL), 97-117 (VAPL…LFLG), and 121-141 (NLMN…LAVF). The EamA domain maps to 14-140 (AFAALTAVFA…IAAGALLLAV (127 aa)).

The protein belongs to the EamA transporter family.

It localises to the cell membrane. This is an uncharacterized protein from Sinorhizobium sp.